Consider the following 413-residue polypeptide: NAD(P)H oxidoreductase RTN4IP1, mitochondrial (413 aa).

A mitochondrion-targeting transit peptide spans M1–Y23. The disordered stretch occupies residues A27–M52. Polar residues predominate over residues L31 to A40. The Enoyl reductase (ER) domain maps to G61–V405. NADPH is bound by residues S228, G230, V231, S251, Y269, G353, F355, H398, and R400.

This sequence belongs to the zinc-containing alcohol dehydrogenase family. Quinone oxidoreductase subfamily.

It is found in the mitochondrion matrix. It carries out the reaction a quinone + NADH + H(+) = a quinol + NAD(+). The catalysed reaction is a quinone + NADPH + H(+) = a quinol + NADP(+). It functions in the pathway cofactor biosynthesis; ubiquinone biosynthesis. NAD(P)H oxidoreductase. Involved in the ubiquinone biosynthetic pathway. The chain is NAD(P)H oxidoreductase RTN4IP1, mitochondrial from Drosophila melanogaster (Fruit fly).